Reading from the N-terminus, the 340-residue chain is Phenylalanine--tRNA ligase alpha subunit (340 aa).

Glutamate 254 contacts Mg(2+).

Belongs to the class-II aminoacyl-tRNA synthetase family. Phe-tRNA synthetase alpha subunit type 1 subfamily. In terms of assembly, tetramer of two alpha and two beta subunits. Mg(2+) is required as a cofactor.

It is found in the cytoplasm. It catalyses the reaction tRNA(Phe) + L-phenylalanine + ATP = L-phenylalanyl-tRNA(Phe) + AMP + diphosphate + H(+). The polypeptide is Phenylalanine--tRNA ligase alpha subunit (Acidithiobacillus ferrooxidans (strain ATCC 23270 / DSM 14882 / CIP 104768 / NCIMB 8455) (Ferrobacillus ferrooxidans (strain ATCC 23270))).